We begin with the raw amino-acid sequence, 361 residues long: 3-dehydroquinate synthase (361 aa).

Residues Gly-104–Asp-108, Thr-128–Thr-129, Lys-140, and Lys-149 contribute to the NAD(+) site. Glu-182, His-245, and His-262 together coordinate Zn(2+).

This sequence belongs to the sugar phosphate cyclases superfamily. Dehydroquinate synthase family. Requires NAD(+) as cofactor. The cofactor is Co(2+). It depends on Zn(2+) as a cofactor.

It localises to the cytoplasm. It catalyses the reaction 7-phospho-2-dehydro-3-deoxy-D-arabino-heptonate = 3-dehydroquinate + phosphate. It participates in metabolic intermediate biosynthesis; chorismate biosynthesis; chorismate from D-erythrose 4-phosphate and phosphoenolpyruvate: step 2/7. Its function is as follows. Catalyzes the conversion of 3-deoxy-D-arabino-heptulosonate 7-phosphate (DAHP) to dehydroquinate (DHQ). This is 3-dehydroquinate synthase from Halalkalibacterium halodurans (strain ATCC BAA-125 / DSM 18197 / FERM 7344 / JCM 9153 / C-125) (Bacillus halodurans).